The chain runs to 431 residues: Cleavage stimulation factor subunit 1 (431 aa).

The tract at residues 14–35 (LYKLIISQLLYDGYISIANGLI) is hydrophobic. WD repeat units lie at residues 106-145 (SHKG…AKSA), 171-210 (DHVD…AKRA), 215-254 (QEAE…CFVS), 260-301 (QHTD…TTFE), 303-343 (AHDG…TLVR), and 395-430 (GHNN…RSTT).

As to quaternary structure, homodimer. The CSTF complex is composed of CSTF1 (50 kDa subunit), CSTF2 (64 kDa subunit) and CSTF3 (77 kDa subunit). Interacts (via repeats WD) directly with CSTF3. Interacts (via repeat WD6) with BARD1. Interacts with ERCC6. Post-translationally, the N-terminus is blocked.

The protein localises to the nucleus. In terms of biological role, one of the multiple factors required for polyadenylation and 3'-end cleavage of mammalian pre-mRNAs. May be responsible for the interaction of CSTF with other factors to form a stable complex on the pre-mRNA. This chain is Cleavage stimulation factor subunit 1 (CSTF1), found in Homo sapiens (Human).